A 425-amino-acid polypeptide reads, in one-letter code: Sodium-dependent glucose transporter 1A (425 aa).

11 consecutive transmembrane segments (helical) span residues 35-55 (LIFV…GVLF), 61-81 (FFLL…IPFC), 84-104 (AVLL…VDTG), 123-143 (ALHF…KLAW), 183-203 (WAYA…FGLF), 228-248 (ALLC…ITYG), 271-291 (SIFW…ATFL), 294-314 (GTMI…LVLF), 320-340 (CLWI…PSGI), 355-375 (AFFV…IGIL), and 382-402 (LPVV…LFPV).

Belongs to the major facilitator superfamily.

It localises to the apical cell membrane. May function as a sodium-dependent glucose transporter. Potential channels for urea in the inner medulla of kidney. This chain is Sodium-dependent glucose transporter 1A, found in Mus musculus (Mouse).